The sequence spans 249 residues: Proteasome activator complex subunit 1 (249 aa).

The tract at residues 55–102 is disordered; that stretch reads SNLKAPLDIPVPDPVKEKEKEERRKQQEKEDKDEKKKGEDEDKGPPCG. The span at 68 to 98 shows a compositional bias: basic and acidic residues; sequence PVKEKEKEERRKQQEKEDKDEKKKGEDEDKG.

This sequence belongs to the PA28 family. In terms of assembly, heterodimer of PSME1 and PSME2, which forms a hexameric ring. PSME1 can form homoheptamers.

Its function is as follows. Implicated in immunoproteasome assembly and required for efficient antigen processing. The PA28 activator complex enhances the generation of class I binding peptides by altering the cleavage pattern of the proteasome. In Bos taurus (Bovine), this protein is Proteasome activator complex subunit 1 (PSME1).